A 245-amino-acid chain; its full sequence is MTFELKYTDRSYLPDQFKAISGNPPVEWKVTNNLVEYPEALRYMQERVENILAQNAHEQVWLLEHPSLYTAGTSAKKKDLLTPHLFPVYEAGRGGEFTYHGPGQRIAYIMLDLKRRRQDIRAFISALEEWIIQMLAKFNIKGERREDRVGVWVQRHSCQSTQNSLYSEDKIAAIGIRVRKWVSFHGVSINVDPNLAHYSGIVPCGITNHGVTSFLDLGLPTKMHDIDIALKQSFEQIFGPIIDIS.

Residues 54 to 242 enclose the BPL/LPL catalytic domain; that stretch reads QNAHEQVWLL…SFEQIFGPII (189 aa). Substrate contacts are provided by residues 93-100, 173-175, and 186-188; these read RGGEFTYH, AIG, and GVS. The active-site Acyl-thioester intermediate is the cysteine 204.

This sequence belongs to the LipB family.

The protein resides in the cytoplasm. The enzyme catalyses octanoyl-[ACP] + L-lysyl-[protein] = N(6)-octanoyl-L-lysyl-[protein] + holo-[ACP] + H(+). It functions in the pathway protein modification; protein lipoylation via endogenous pathway; protein N(6)-(lipoyl)lysine from octanoyl-[acyl-carrier-protein]: step 1/2. Its function is as follows. Catalyzes the transfer of endogenously produced octanoic acid from octanoyl-acyl-carrier-protein onto the lipoyl domains of lipoate-dependent enzymes. Lipoyl-ACP can also act as a substrate although octanoyl-ACP is likely to be the physiological substrate. The polypeptide is Octanoyltransferase (Bartonella henselae (strain ATCC 49882 / DSM 28221 / CCUG 30454 / Houston 1) (Rochalimaea henselae)).